The following is a 352-amino-acid chain: tRNA uridine(34) hydroxylase (352 aa).

Residues 144–238 (SDPDVILIDT…YLEEVPASDS (95 aa)) form the Rhodanese domain. Cysteine 198 (cysteine persulfide intermediate) is an active-site residue.

It belongs to the TrhO family.

It carries out the reaction uridine(34) in tRNA + AH2 + O2 = 5-hydroxyuridine(34) in tRNA + A + H2O. Catalyzes oxygen-dependent 5-hydroxyuridine (ho5U) modification at position 34 in tRNAs. The chain is tRNA uridine(34) hydroxylase from Psychrobacter cryohalolentis (strain ATCC BAA-1226 / DSM 17306 / VKM B-2378 / K5).